An 89-amino-acid chain; its full sequence is Small ribosomal subunit protein uS15 (89 aa).

Belongs to the universal ribosomal protein uS15 family. As to quaternary structure, part of the 30S ribosomal subunit. Forms a bridge to the 50S subunit in the 70S ribosome, contacting the 23S rRNA.

One of the primary rRNA binding proteins, it binds directly to 16S rRNA where it helps nucleate assembly of the platform of the 30S subunit by binding and bridging several RNA helices of the 16S rRNA. Functionally, forms an intersubunit bridge (bridge B4) with the 23S rRNA of the 50S subunit in the ribosome. This is Small ribosomal subunit protein uS15 from Levilactobacillus brevis (strain ATCC 367 / BCRC 12310 / CIP 105137 / JCM 1170 / LMG 11437 / NCIMB 947 / NCTC 947) (Lactobacillus brevis).